Here is a 549-residue protein sequence, read N- to C-terminus: Cytoplasmic trehalase (549 aa).

Substrate contacts are provided by residues arginine 168, 175–176 (WD), asparagine 212, 221–223 (RSQ), 292–294 (RDE), and glycine 324. Active-site proton donor/acceptor residues include aspartate 326 and glutamate 509. Glutamate 525 lines the substrate pocket.

The protein belongs to the glycosyl hydrolase 37 family. Monomer.

It is found in the cytoplasm. The catalysed reaction is alpha,alpha-trehalose + H2O = alpha-D-glucose + beta-D-glucose. Its pathway is glycan degradation; trehalose degradation; D-glucose from alpha,alpha-trehalose: step 1/1. Its function is as follows. Hydrolyzes trehalose to glucose. Could be involved, in cells returning to low osmolarity conditions, in the utilization of the accumulated cytoplasmic trehalose, which was synthesized in response to high osmolarity. The chain is Cytoplasmic trehalase from Salmonella schwarzengrund (strain CVM19633).